We begin with the raw amino-acid sequence, 593 residues long: Myc box-dependent-interacting protein 1 (593 aa).

A2 is modified (N-acetylalanine). The interval 2-122 (AEMGSKGVTA…DYHQKLVDQA (121 aa)) is interaction with BIN2. Coiled-coil stretches lie at residues 15–42 (ASNV…TKDE) and 193–267 (HLVA…NDVL). Positions 29 to 276 (VLQKLGKADE…LVGLEKQHGS (248 aa)) constitute a BAR domain. Disordered regions lie at residues 280-354 (TVKA…KEVK) and 400-488 (PVTS…AASS). Phosphoserine occurs at positions 296, 298, and 303. T307 and T323 each carry phosphothreonine. At S331 the chain carries Phosphoserine. Positions 378 to 421 (FEAPGPFSEQASLLDLDFDPLPPVTSPVKAPTPSGQSIPWDLWE) are clathrin-binding. The region spanning 520-593 (GFMFKVQAQH…FPENFTERVP (74 aa)) is the SH3 domain.

In terms of assembly, heterodimer with AMPH. Binds SH3GLB1. Interacts (via SH3 domain) with DNM1. Interacts with SYNJ1. Interacts (via SH3 domain) with DNM2. Isoform IIA interacts with CLTC. Isoform IIB does not interact with CLTC. Isoform IIC1 does not interact with CLTC. Isoform IIC2 does not interact with CLTC. Interacts with AP2A2. Interacts with AP2B1. Interacts with MYC (via N-terminal transactivation domain); the interaction requires the integrity of the conserved MYC box regions 1 and 2. Interacts with BIN2. Interacts with SNX4. Interacts (via BAR domain) with BACE1. Binds (via BAR domain) F-actin. As to quaternary structure, (Microbial infection) Interacts (SH3 domain) with HCV NS5A. Post-translationally, phosphorylated by protein kinase C. As to expression, ubiquitous. Highest expression in the brain and muscle. Expressed in oligodendrocytes. Isoform IIA is expressed only in the brain, where it is detected in the gray matter, but not in the white matter. Isoform BIN1 is widely expressed with highest expression in skeletal muscle.

Its subcellular location is the nucleus. The protein localises to the cytoplasm. It localises to the endosome. The protein resides in the cell membrane. It is found in the sarcolemma. Its subcellular location is the T-tubule. Is a key player in the control of plasma membrane curvature, membrane shaping and membrane remodeling. Required in muscle cells for the formation of T-tubules, tubular invaginations of the plasma membrane that function in depolarization-contraction coupling. Is a negative regulator of endocytosis. Is also involved in the regulation of intracellular vesicles sorting, modulation of BACE1 trafficking and the control of amyloid-beta production. In neuronal circuits, endocytosis regulation may influence the internalization of PHF-tau aggregates. May be involved in the regulation of MYC activity and the control cell proliferation. Has actin bundling activity and stabilizes actin filaments against depolymerization in vitro. The protein is Myc box-dependent-interacting protein 1 (BIN1) of Homo sapiens (Human).